Here is a 408-residue protein sequence, read N- to C-terminus: Tyrosine--tRNA ligase (408 aa).

The 'HIGH' region motif lies at 46–55 (PTAPDLHVGH). Residues 230-234 (KMSKS) carry the 'KMSKS' region motif. Position 233 (Lys233) interacts with ATP. The 62-residue stretch at 343–404 (VWICRLLTDA…GKRRFARIKF (62 aa)) folds into the S4 RNA-binding domain.

This sequence belongs to the class-I aminoacyl-tRNA synthetase family. TyrS type 2 subfamily. As to quaternary structure, homodimer.

The protein resides in the cytoplasm. It carries out the reaction tRNA(Tyr) + L-tyrosine + ATP = L-tyrosyl-tRNA(Tyr) + AMP + diphosphate + H(+). Functionally, catalyzes the attachment of tyrosine to tRNA(Tyr) in a two-step reaction: tyrosine is first activated by ATP to form Tyr-AMP and then transferred to the acceptor end of tRNA(Tyr). This is Tyrosine--tRNA ligase from Syntrophotalea carbinolica (strain DSM 2380 / NBRC 103641 / GraBd1) (Pelobacter carbinolicus).